The following is a 367-amino-acid chain: Outer membrane protein P2 (367 aa).

The signal sequence occupies residues 1 to 20 (MKKTLAALIVGAFAASAANA).

It belongs to the Gram-negative porin family. As to quaternary structure, homotrimer.

It is found in the cell outer membrane. Forms pores that allow passive diffusion of small molecules across the outer membrane. This chain is Outer membrane protein P2 (ompP2), found in Haemophilus influenzae.